The following is a 451-amino-acid chain: Secreted RxLR effector protein 111 (451 aa).

Positions 1–19 are cleaved as a signal peptide; the sequence is MRGTLATALLLVASCRIAA. Residues 48–69 carry the RxLR-dEER motif; it reads RFLRDNREQRVALALTAANESR. The N-linked (GlcNAc...) asparagine glycan is linked to Asn66. Composition is skewed to polar residues over residues 175–184 and 413–426; these read RKTLSKTQFK and SPAS…QRTG. 2 disordered regions span residues 175 to 194 and 404 to 451; these read RKTL…STKR and IPLQ…NKHA. Over residues 437–451 the composition is skewed to basic and acidic residues; the sequence is PERDSFRHIESNKHA.

This sequence belongs to the RxLR effector family.

The protein resides in the secreted. The protein localises to the host nucleus. Its function is as follows. Secreted effector that acts as an elicitor that induces cell death in host plant cells. The chain is Secreted RxLR effector protein 111 from Plasmopara viticola (Downy mildew of grapevine).